Here is a 180-residue protein sequence, read N- to C-terminus: GTP cyclohydrolase 1 (180 aa).

Positions 71, 74, and 142 each coordinate Zn(2+).

This sequence belongs to the GTP cyclohydrolase I family. In terms of assembly, toroid-shaped homodecamer, composed of two pentamers of five dimers.

It catalyses the reaction GTP + H2O = 7,8-dihydroneopterin 3'-triphosphate + formate + H(+). Its pathway is cofactor biosynthesis; 7,8-dihydroneopterin triphosphate biosynthesis; 7,8-dihydroneopterin triphosphate from GTP: step 1/1. The chain is GTP cyclohydrolase 1 (folE) from Helicobacter pylori (strain ATCC 700392 / 26695) (Campylobacter pylori).